We begin with the raw amino-acid sequence, 429 residues long: TNFAIP3-interacting protein 2 (429 aa).

Phosphoserine is present on Ser-7. Positions 29-117 (QRLRRLQDQL…MQQLLSQPQH (89 aa)) form a coiled coil. The segment covering 177–195 (HAQRNVGERSPDQSEHTDG) has biased composition (basic and acidic residues). Residues 177-199 (HAQRNVGERSPDQSEHTDGHTSV) are disordered. Coiled coils occupy residues 196 to 226 (HTSV…LNAK) and 255 to 340 (ELMR…QVSW). A ubiquitin-binding domain (UBD) region spans residues 289 to 347 (RDAALERVQMLEQQILAYKDDFMSERADRERAQSRIQELEEKVASLLHQVSWRQDSREP). The tract at residues 372–400 (PGGWRPGTGSQQPEPPAEGGHPGAAQRGQ) is disordered. Positions 388 to 397 (AEGGHPGAAQ) are enriched in low complexity. The CCHC NOA-type zinc finger occupies 397 to 429 (QRGQGDLQCPHCLQCFSDEQGEELLRHVAECCQ). Residues Cys-405, Cys-408, His-423, and Cys-427 each coordinate Zn(2+).

As to quaternary structure, interacts with STK11/LKB1, TNFAIP3, IKBKG, NFKB1, MAP3K8, TEK, RIPK1, CHUK, IKBKB and SMARCD1. Interacts with polyubiquitin. In terms of assembly, (Microbial infection) Interacts with severe fever with thrombocytopenia syndrome virus (SFTSV) NSs; this interaction promotes TPL2 complex formation and signaling activity leading to IL-10 production. In vitro phosphorylated by CHUK. Post-translationally, ubiquitinated; undergoes 'Lys-48'-linked polyubiquitination probably leading to constitutive proteasomal degradation which can be impaired by IKK-A/CHUK or IKBKB probably involving deubiquitination. Deubiquitinated by USP35; leading to stabilization and inhibition of TNFalpha-induced NF-kappa-B activation. As to expression, ubiquitously expressed in all tissues examined.

It localises to the cytoplasm. The protein localises to the nucleus. Inhibits NF-kappa-B activation by blocking the interaction of RIPK1 with its downstream effector NEMO/IKBKG. Forms a ternary complex with NFKB1 and MAP3K8 but appears to function upstream of MAP3K8 in the TLR4 signaling pathway that regulates MAP3K8 activation. Involved in activation of the MEK/ERK signaling pathway during innate immune response; this function seems to be stimulus- and cell type specific. Required for stability of MAP3K8. Involved in regulation of apoptosis in endothelial cells; promotes TEK agonist-stimulated endothelial survival. May act as transcriptional coactivator when translocated to the nucleus. Enhances CHUK-mediated NF-kappa-B activation involving NF-kappa-B p50-p65 and p50-c-Rel complexes. The chain is TNFAIP3-interacting protein 2 from Homo sapiens (Human).